The chain runs to 280 residues: Putative protein-tyrosine sulfotransferase (280 aa).

Arginine 16 to threonine 20 provides a ligand contact to 3'-phosphoadenylyl sulfate. Residues cysteine 34 and cysteine 89 are joined by a disulfide bond. The active-site Proton donor/acceptor is glutamate 37. Asparagine 57 carries an N-linked (GlcNAc...) asparagine glycan. 3'-phosphoadenylyl sulfate is bound by residues arginine 116, serine 124, and arginine 128. Asparagine 136 carries an N-linked (GlcNAc...) asparagine glycan. Cysteine 158 and cysteine 165 form a disulfide bridge. 3'-phosphoadenylyl sulfate-binding positions include tyrosine 170 and serine 215 to asparagine 224.

The protein belongs to the protein sulfotransferase family.

It catalyses the reaction L-tyrosyl-[protein] + 3'-phosphoadenylyl sulfate = O-sulfo-L-tyrosine-[protein] + adenosine 3',5'-bisphosphate + H(+). In terms of biological role, catalyzes the O-sulfation of tyrosine residues within acidic motifs of polypeptides, using 3'-phosphoadenylyl sulfate (PAPS) as cosubstrate. This Caenorhabditis briggsae protein is Putative protein-tyrosine sulfotransferase.